The chain runs to 452 residues: Pup--protein ligase (452 aa).

E9 is a Mg(2+) binding site. R53 serves as a coordination point for ATP. Y55 lines the Mg(2+) pocket. D57 serves as the catalytic Proton acceptor. E63 is a Mg(2+) binding site. T66 and W419 together coordinate ATP.

It belongs to the Pup ligase/Pup deamidase family. Pup-conjugating enzyme subfamily.

It catalyses the reaction ATP + [prokaryotic ubiquitin-like protein]-L-glutamate + [protein]-L-lysine = ADP + phosphate + N(6)-([prokaryotic ubiquitin-like protein]-gamma-L-glutamyl)-[protein]-L-lysine.. The protein operates within protein degradation; proteasomal Pup-dependent pathway. Its pathway is protein modification; protein pupylation. Its function is as follows. Catalyzes the covalent attachment of the prokaryotic ubiquitin-like protein modifier Pup to the proteasomal substrate proteins, thereby targeting them for proteasomal degradation. This tagging system is termed pupylation. The ligation reaction involves the side-chain carboxylate of the C-terminal glutamate of Pup and the side-chain amino group of a substrate lysine. In Thermobifida fusca (strain YX), this protein is Pup--protein ligase.